Reading from the N-terminus, the 101-residue chain is Small ribosomal subunit protein uS14 (101 aa).

It belongs to the universal ribosomal protein uS14 family. Part of the 30S ribosomal subunit. Contacts proteins S3 and S10.

Binds 16S rRNA, required for the assembly of 30S particles and may also be responsible for determining the conformation of the 16S rRNA at the A site. In Xylella fastidiosa (strain M23), this protein is Small ribosomal subunit protein uS14.